The primary structure comprises 479 residues: UDP-N-acetylmuramoyl-L-alanyl-D-glutamate--2,6-diaminopimelate ligase (479 aa).

Ser21 serves as a coordination point for UDP-N-acetyl-alpha-D-muramoyl-L-alanyl-D-glutamate. Position 98 to 104 (98 to 104) interacts with ATP; sequence GTNGKSS. Residues 144 to 145, Ser171, Gln177, and Arg179 contribute to the UDP-N-acetyl-alpha-D-muramoyl-L-alanyl-D-glutamate site; that span reads TT. At Lys211 the chain carries N6-carboxylysine. Residues Arg372, 396-399, Gly446, and Glu450 contribute to the meso-2,6-diaminopimelate site; that span reads DNPR. The Meso-diaminopimelate recognition motif motif lies at 396-399; it reads DNPR.

It belongs to the MurCDEF family. MurE subfamily. Mg(2+) is required as a cofactor. In terms of processing, carboxylation is probably crucial for Mg(2+) binding and, consequently, for the gamma-phosphate positioning of ATP.

It is found in the cytoplasm. It catalyses the reaction UDP-N-acetyl-alpha-D-muramoyl-L-alanyl-D-glutamate + meso-2,6-diaminopimelate + ATP = UDP-N-acetyl-alpha-D-muramoyl-L-alanyl-gamma-D-glutamyl-meso-2,6-diaminopimelate + ADP + phosphate + H(+). The protein operates within cell wall biogenesis; peptidoglycan biosynthesis. In terms of biological role, catalyzes the addition of meso-diaminopimelic acid to the nucleotide precursor UDP-N-acetylmuramoyl-L-alanyl-D-glutamate (UMAG) in the biosynthesis of bacterial cell-wall peptidoglycan. The polypeptide is UDP-N-acetylmuramoyl-L-alanyl-D-glutamate--2,6-diaminopimelate ligase (Rickettsia rickettsii).